The sequence spans 171 residues: Allophycocyanin subunit beta-18 (171 aa).

N4-methylasparagine is present on N72. C82 contributes to the (2R,3E)-phycocyanobilin binding site.

It belongs to the phycobiliprotein family. In terms of assembly, heterodimer of an alpha and a beta chain. Post-translationally, contains one covalently linked bilin chromophore.

The protein localises to the plastid. It localises to the chloroplast thylakoid membrane. Its function is as follows. Light-harvesting photosynthetic bile pigment-protein from the phycobiliprotein complex. Allophycocyanin has a maximum absorption at approximately 650 nanometers. This is Allophycocyanin subunit beta-18 (apcF) from Aglaothamnion neglectum (Red alga).